Here is a 140-residue protein sequence, read N- to C-terminus: 3-hydroxyacyl-[acyl-carrier-protein] dehydratase FabZ (140 aa).

Residue H47 is part of the active site.

It belongs to the thioester dehydratase family. FabZ subfamily.

It localises to the cytoplasm. The catalysed reaction is a (3R)-hydroxyacyl-[ACP] = a (2E)-enoyl-[ACP] + H2O. Involved in unsaturated fatty acids biosynthesis. Catalyzes the dehydration of short chain beta-hydroxyacyl-ACPs and long chain saturated and unsaturated beta-hydroxyacyl-ACPs. The sequence is that of 3-hydroxyacyl-[acyl-carrier-protein] dehydratase FabZ from Streptococcus pneumoniae serotype 4 (strain ATCC BAA-334 / TIGR4).